The primary structure comprises 199 residues: Chaperone protein TorD (199 aa).

It belongs to the TorD/DmsD family. TorD subfamily.

It localises to the cytoplasm. Functionally, involved in the biogenesis of TorA. Acts on TorA before the insertion of the molybdenum cofactor and, as a result, probably favors a conformation of the apoenzyme that is competent for acquiring the cofactor. In Escherichia coli (strain K12 / MC4100 / BW2952), this protein is Chaperone protein TorD.